The primary structure comprises 734 residues: Protein SKG6 (734 aa).

The tract at residues 30–68 (TRRDDSDSSSSSASSTKNSKSAECTGSKQQCQLPTDSSH) is disordered. Positions 37 to 51 (SSSSSASSTKNSKSA) are enriched in low complexity. Residues 53-68 (CTGSKQQCQLPTDSSH) are compositionally biased toward polar residues. A helical membrane pass occupies residues 72–96 (VTVGVAVAVPVGVIIIVLAVILCIV). At serine 137 the chain carries Phosphoserine. At threonine 169 the chain carries Phosphothreonine. A phosphoserine mark is found at serine 191, serine 193, and serine 219. Threonine 221 is modified (phosphothreonine). Residues serine 222 and serine 251 each carry the phosphoserine modification. Residues 239–327 (RFQESESFRS…LRFGKDDDNY (89 aa)) are disordered. Polar residues predominate over residues 253 to 273 (IHNNQLSRGSATEGANKQFTF). Positions 280–299 (SSSVSEEAEVLNESNESASN) are enriched in low complexity. Over residues 309–327 (SSEKTHERNLRFGKDDDNY) the composition is skewed to basic and acidic residues. Serine 369 bears the Phosphoserine mark. A disordered region spans residues 647–671 (DLTAKPSYKPAGSFRSVSATNSRNN). Residues 661–671 (RSVSATNSRNN) are compositionally biased toward polar residues. Serine 672 and serine 717 each carry phosphoserine. The segment at 707–734 (SVGGILPHSGSQDDLRKQLGSSHNYTVN) is disordered. Residues 725-734 (LGSSHNYTVN) show a composition bias toward polar residues.

Belongs to the SKG6/TOS2 family. Interacts with ZDS1 and ZDS2. Post-translationally, phosphorylated by CDC28.

The protein resides in the membrane. In terms of biological role, may be involved in the polarity establishment process. Suppresses the lethality of KEX2-GAS1 double null mutant when overexpressed. This chain is Protein SKG6 (SKG6), found in Saccharomyces cerevisiae (strain ATCC 204508 / S288c) (Baker's yeast).